We begin with the raw amino-acid sequence, 244 residues long: Gas vesicle protein F (244 aa).

The segment at 1 to 109 (MTVGLYLYGI…QLKELFAKLS (109 aa)) is N-terminus. A C-terminus, modifed ferredoxin fold region spans residues 110–233 (GQREVSIKIF…GDRLRIRYNN (124 aa)). Positions 234-244 (LTAPYTFAQLI) are C-tail.

This sequence belongs to the gas vesicle GvpF/GvpL family. As to quaternary structure, binds GvpA.

It is found in the gas vesicle. In terms of biological role, a minor component of the gas vesicle, may be involved in preventing GvpA aggregation during gas vesicle nucleation. Gas vesicles (GV) are hollow, gas filled proteinaceous nanostructures. During planktonic growth they allow positioning of the organism at a favorable depth for light or nutrient acquisition. The chain is Gas vesicle protein F from Microcystis aeruginosa (strain PCC 7806).